Here is a 1230-residue protein sequence, read N- to C-terminus: MGISRRPKADKNASAADSAPGGKPNIQKAQFDTTKKKEVGVSDLTLISKVSNEAINENLKKRFDNREIYTYIGHVLVSVNPFRDLGIYTDAVLESYKGKNRLEMPPHVFAVAESAYYNMNAYKDNQCVIISGESGAGKTEAAKRIMQYIANVSGGSNSSIQETKEMVLATNPLLESFGNAKTLRNNNSSRFGKYLQLQFNAQGEPVGADITNYLLEKTRVVTQIKDERNFHIFYQFTKGASQAYRESYGIQQPSQYLYTSKAGCFDVDGIDDLAEYQDTLQAMKVIGLSQAEQDEIFRMLAAILWTGNIQFREGDDGYATVVDQSVVDFLAYLLDVDAAHVIQAITIRILTPRNGEVIESPANVPQAMATRDALAKAIYNNLFDWIVERVNKSLTARAETSNSIGILDIYGFEIFEQNSFEQLCINYVNEKLQQIFIQLTLKTEQEEYAREQIKWTPIKYFDNKIVCDLIEAIRPPGVFSAMKDATKTAHADPAACDRTFMQAISGMSNPHLTPRQGNFIIKHYAGDVSYTVEGITDKNKDQLLKGLLNLFGQSRNHFIHELFPHQVDQDNRKQPPSAGDKIKASANDLVTTLMKATPSYIRTIKPNENKSPTEYNEKNVLHQVKYLGLQENVRIRRAGFAYRQTFDKFVERFYLLSPKTSYAGDYIWTGDSKTGAMQILKDTNIPVEEYQMGVTKAFIKAPETLFALEHMRDRYWHNMAARIQRVWRAFLQIRIEAATRIQRMFRKKREGKEFLELREKGHQILQGRKERRRYSLLGSRRFMGDYLGIAATTGPGSKIRGSINLPASEVTLFSCRGEILETKFGRSSKLSPRIFIMTRTKFYIVSQLLVNKQVQIAVEKAIPLGAIKFVSISTCRDDWFSLGVGSPQEADPLLTCVFKTELFTHMQAAMPGGGFNLKIGDSIEYAKKPNKMQLIKVVKDSQQAQDHYKSATIHTQAGEPPNSRSKPLPKGKPVAAKPFTSGRLIKPGGPGGRPSRLTNGNRPTPKPVPTPAPAAARPVPAVNPVAASIPVHTRNTSVQSTQSTRAVPPPPPPAPPAPPPAPVSKEPQYRVLYEFAGQSANEFSLKQGEIVTVLQKETNGWWLTKNVRGQGWAPTAYLEEVTPPPPPPVATRPAPPPAPGPPKMNGTNGAAIRSKPTPPAPPAKRPAAGRKPAPPPAPRDSGMSISSNGSGNNSGRSTPTPSLAGGLAEALRARQSAMQGNAKREDEDDW.

Positions 1–32 (MGISRRPKADKNASAADSAPGGKPNIQKAQFD) are disordered. Positions 39-713 (VGVSDLTLIS…TLFALEHMRD (675 aa)) constitute a Myosin motor domain. 132 to 139 (GESGAGKT) is an ATP binding site. Positions 403 to 485 (SIGILDIYGF…PGVFSAMKDA (83 aa)) are actin-binding. IQ domains lie at 717 to 737 (HNMAARIQRVWRAFLQIRIEA) and 738 to 763 (ATRIQRMFRKKREGKEFLELREKGHQ). Residues 771 to 961 (RRRYSLLGSR…TIHTQAGEPP (191 aa)) enclose the TH1 domain. 3 disordered regions span residues 945 to 1018 (QDHY…AARP), 1033 to 1065 (TRNTSVQSTQSTRAVPPPPPPAPPAPPPAPVSK), and 1116 to 1230 (AYLE…EDDW). The span at 1033 to 1045 (TRNTSVQSTQSTR) shows a compositional bias: polar residues. Composition is skewed to pro residues over residues 1047-1062 (VPPPPPPAPPAPPPAP) and 1122-1142 (TPPPPPPVATRPAPPPAPGPP). The SH3 domain maps to 1064 to 1123 (SKEPQYRVLYEFAGQSANEFSLKQGEIVTVLQKETNGWWLTKNVRGQGWAPTAYLEEVTP). Over residues 1179–1214 (RDSGMSISSNGSGNNSGRSTPTPSLAGGLAEALRAR) the composition is skewed to low complexity.

Belongs to the TRAFAC class myosin-kinesin ATPase superfamily. Myosin family.

It is found in the cytoplasm. The protein localises to the cytoskeleton. It localises to the actin patch. In terms of biological role, type-I myosin implicated in the organization of the actin cytoskeleton. Required for proper actin cytoskeleton polarization. At the cell cortex, assembles in patch-like structures together with proteins from the actin-polymerizing machinery and promotes actin assembly. Functions as actin nucleation-promoting factor (NPF) for the Arp2/3 complex. The polypeptide is Myosin-1 (myoA) (Sclerotinia sclerotiorum (strain ATCC 18683 / 1980 / Ss-1) (White mold)).